A 323-amino-acid polypeptide reads, in one-letter code: MKHLINIADHSAEEILGLMDEADRFREALEGREVKKLPTLRGRTVFTLFYENSTRTRSSFETAGKWMSADVINLSASTSSVKKGESLKDTGLTLASIGADAIIMRHPSSGAAQQLAGWVAPEGQGPSVINAGDGSHQHPTQALLDAVTMRQRLHLGADRSAAGTGFEGLKVTIVGDCLHSRVVRSNVDLLSTLGAEVTLVAPPTLLPFGVDTWPVRVSHDFDAEVPEADVVMMLRVQAERMNGGFFPSHREYASLYGLSKDRAAAMKKDAIIMHPGPMVRGMEINYAVADYDNTAVLQQVNNGVHVRMATLFTLLTNGENAGI.

Positions 55 and 56 each coordinate carbamoyl phosphate. K83 contributes to the L-aspartate binding site. Carbamoyl phosphate-binding residues include R105, H138, and Q141. Positions 181 and 235 each coordinate L-aspartate. The carbamoyl phosphate site is built by G276 and P277.

This sequence belongs to the aspartate/ornithine carbamoyltransferase superfamily. ATCase family. As to quaternary structure, heterododecamer (2C3:3R2) of six catalytic PyrB chains organized as two trimers (C3), and six regulatory PyrI chains organized as three dimers (R2).

It carries out the reaction carbamoyl phosphate + L-aspartate = N-carbamoyl-L-aspartate + phosphate + H(+). Its pathway is pyrimidine metabolism; UMP biosynthesis via de novo pathway; (S)-dihydroorotate from bicarbonate: step 2/3. Its function is as follows. Catalyzes the condensation of carbamoyl phosphate and aspartate to form carbamoyl aspartate and inorganic phosphate, the committed step in the de novo pyrimidine nucleotide biosynthesis pathway. This is Aspartate carbamoyltransferase catalytic subunit from Corynebacterium aurimucosum (strain ATCC 700975 / DSM 44827 / CIP 107346 / CN-1) (Corynebacterium nigricans).